Reading from the N-terminus, the 134-residue chain is Small ribosomal subunit protein uS11 (134 aa).

Disordered regions lie at residues 1–22 (MPPK…KNVA) and 114–134 (SIQD…RRRV). Basic residues predominate over residues 9–22 (AAKKVRRKEKKNVA).

Belongs to the universal ribosomal protein uS11 family. Part of the 30S ribosomal subunit. Interacts with proteins S7 and S18. Binds to IF-3.

Its function is as follows. Located on the platform of the 30S subunit, it bridges several disparate RNA helices of the 16S rRNA. Forms part of the Shine-Dalgarno cleft in the 70S ribosome. This Streptomyces avermitilis (strain ATCC 31267 / DSM 46492 / JCM 5070 / NBRC 14893 / NCIMB 12804 / NRRL 8165 / MA-4680) protein is Small ribosomal subunit protein uS11.